We begin with the raw amino-acid sequence, 592 residues long: Aspartate--tRNA(Asp/Asn) ligase (592 aa).

Glu182 lines the L-aspartate pocket. The interval 206 to 209 is aspartate; that stretch reads QIFK. Arg228 provides a ligand contact to L-aspartate. ATP is bound by residues 228–230 and Gln237; that span reads RDE. His455 is an L-aspartate binding site. Residue Glu489 coordinates ATP. Arg496 provides a ligand contact to L-aspartate. Position 541–544 (541–544) interacts with ATP; the sequence is GLDR.

The protein belongs to the class-II aminoacyl-tRNA synthetase family. Type 1 subfamily. In terms of assembly, homodimer.

It localises to the cytoplasm. The catalysed reaction is tRNA(Asx) + L-aspartate + ATP = L-aspartyl-tRNA(Asx) + AMP + diphosphate. Functionally, aspartyl-tRNA synthetase with relaxed tRNA specificity since it is able to aspartylate not only its cognate tRNA(Asp) but also tRNA(Asn). Reaction proceeds in two steps: L-aspartate is first activated by ATP to form Asp-AMP and then transferred to the acceptor end of tRNA(Asp/Asn). This is Aspartate--tRNA(Asp/Asn) ligase from Thermoanaerobacter sp. (strain X514).